The primary structure comprises 452 residues: UDP-N-acetylmuramoylalanine--D-glutamate ligase (452 aa).

Residue 115–121 participates in ATP binding; it reads GTNGKTT.

This sequence belongs to the MurCDEF family.

Its subcellular location is the cytoplasm. The enzyme catalyses UDP-N-acetyl-alpha-D-muramoyl-L-alanine + D-glutamate + ATP = UDP-N-acetyl-alpha-D-muramoyl-L-alanyl-D-glutamate + ADP + phosphate + H(+). It participates in cell wall biogenesis; peptidoglycan biosynthesis. Functionally, cell wall formation. Catalyzes the addition of glutamate to the nucleotide precursor UDP-N-acetylmuramoyl-L-alanine (UMA). This chain is UDP-N-acetylmuramoylalanine--D-glutamate ligase, found in Geobacter metallireducens (strain ATCC 53774 / DSM 7210 / GS-15).